Reading from the N-terminus, the 647-residue chain is Acetyl-coenzyme A synthetase (647 aa).

CoA-binding positions include Arg-190–Arg-193 and Thr-310. ATP-binding positions include Gly-386–Pro-388, Asp-410–Thr-415, Asp-499, and Arg-514. Ser-522 contacts CoA. Arg-525 lines the ATP pocket. Val-536, His-538, and Val-541 together coordinate Mg(2+). Arg-583 provides a ligand contact to CoA. Lys-608 carries the N6-acetyllysine modification.

The protein belongs to the ATP-dependent AMP-binding enzyme family. Requires Mg(2+) as cofactor. Acetylated. Deacetylation by the SIR2-homolog deacetylase activates the enzyme.

It carries out the reaction acetate + ATP + CoA = acetyl-CoA + AMP + diphosphate. In terms of biological role, catalyzes the conversion of acetate into acetyl-CoA (AcCoA), an essential intermediate at the junction of anabolic and catabolic pathways. AcsA undergoes a two-step reaction. In the first half reaction, AcsA combines acetate with ATP to form acetyl-adenylate (AcAMP) intermediate. In the second half reaction, it can then transfer the acetyl group from AcAMP to the sulfhydryl group of CoA, forming the product AcCoA. This Xylella fastidiosa (strain Temecula1 / ATCC 700964) protein is Acetyl-coenzyme A synthetase.